Here is a 448-residue protein sequence, read N- to C-terminus: Na(+)-malate symporter (448 aa).

A run of 11 helical transmembrane segments spans residues 31–51 (IGVI…LAAY), 60–80 (LGGF…GQRI), 86–106 (IGGP…YNVL), 123–143 (FLYF…NRIV), 153–173 (VPLV…GFIF), 182–202 (FFVV…PLSI), 214–234 (VFVS…IICA), 276–293 (LMGA…FGGL), 297–319 (FIFI…ANIL), 333–353 (FISS…FIPL), and 359–379 (VISI…IGSG).

This sequence belongs to the 2-hydroxycarboxylate transporter (2-HCT) (TC 2.A.24) family.

The protein localises to the cell membrane. Acts as a Na(+)-malate symporter, as it catalyzes malate-dependent uptake of Na(+) and Na(+)-dependent uptake of malate. In Bacillus subtilis (strain 168), this protein is Na(+)-malate symporter.